Reading from the N-terminus, the 425-residue chain is Serine--tRNA ligase (425 aa).

230 to 232 (TAE) provides a ligand contact to L-serine. Position 261–263 (261–263 (RSE)) interacts with ATP. An L-serine-binding site is contributed by E284. 348–351 (EISS) contributes to the ATP binding site. An L-serine-binding site is contributed by S384.

This sequence belongs to the class-II aminoacyl-tRNA synthetase family. Type-1 seryl-tRNA synthetase subfamily. Homodimer. The tRNA molecule binds across the dimer.

The protein localises to the cytoplasm. It carries out the reaction tRNA(Ser) + L-serine + ATP = L-seryl-tRNA(Ser) + AMP + diphosphate + H(+). The catalysed reaction is tRNA(Sec) + L-serine + ATP = L-seryl-tRNA(Sec) + AMP + diphosphate + H(+). It participates in aminoacyl-tRNA biosynthesis; selenocysteinyl-tRNA(Sec) biosynthesis; L-seryl-tRNA(Sec) from L-serine and tRNA(Sec): step 1/1. In terms of biological role, catalyzes the attachment of serine to tRNA(Ser). Is also able to aminoacylate tRNA(Sec) with serine, to form the misacylated tRNA L-seryl-tRNA(Sec), which will be further converted into selenocysteinyl-tRNA(Sec). The polypeptide is Serine--tRNA ligase (Streptococcus pyogenes serotype M5 (strain Manfredo)).